A 798-amino-acid polypeptide reads, in one-letter code: MAHKGKAAPAKPPTSHKKEVKSLKRKRGQEELSTLRKAIDEFDLKSTPKAFAELPLSEPTAKGVRDSHFETLTDIQARAIPLALKGRDILGAAKTGSGKTLAFLVPLLEKLYREQWTQEAKLGALVLSPTRELAVQTFQVLRKIGRHHLFSAGLVIGGKSVREEAEALSRMNILIGTPGRILQHLDQTHGFDVDNLQLLVLDEADRIMDLGFQRDVDALVQHLPTTRQTLLFSATQSKKVSDLARLSLKDPEYVSVHAEATTATPSTLQQHYIVTPLPEKLDTLWGFIKANLKSKMVVFLSSGKQVRFVYESFRQMQPGIPLLHMHGRQKQLARLDVTKRFDSSKHACLFATDVIARGIDFTGVDWVVQVDAPEDTDDYIHRVGRTARYEREGKAVIFLDPSEEAGMLKRLERKKVPITKVTAKDSKKKSIRDELQSICWKSHDVKYLAQKAFISYARAVHRATERDEKHNENSDQVFKFDKLDLEGFAKSMGLAGAPQIKFQKGEDVKRMKNAPRAPLSSGSEDESGDDKPRRRKKDEVRTKADKMFERTNQDVLSKHYRNLVEDGENDEEEDFFTTKRVLRGDELDEAAGGAGAGLPTAKTIDLGGTELVLDSKRREKLIKSKKQLAKLKGKGQKLVFDDDGVAHPLYTLQDEDDFKQQGPAEALRKQFVEQEGDKVKEADIDDKALAKQKKREKKLKRKARERGEAEGNGGPQLAGGDDDDEDPLEMLRSLPMAGTTRDSGDDESEDERPKKKPKKWFQDDSDDERKPKSKVIELDHEPDTLEDYEAIAAGLLDD.

Residues 1–30 (MAHKGKAAPAKPPTSHKKEVKSLKRKRGQE) are disordered. The segment covering 16 to 30 (HKKEVKSLKRKRGQE) has biased composition (basic and acidic residues). Residues 49–77 (KAFAELPLSEPTAKGVRDSHFETLTDIQA) carry the Q motif motif. Residues 80–254 (IPLALKGRDI…RLSLKDPEYV (175 aa)) enclose the Helicase ATP-binding domain. 93–100 (AKTGSGKT) contributes to the ATP binding site. The DEAD box signature appears at 202 to 205 (DEAD). Residues 280-435 (KLDTLWGFIK…SKKKSIRDEL (156 aa)) enclose the Helicase C-terminal domain. Disordered regions lie at residues 503–544 (QKGE…RTKA) and 653–781 (QDED…LDHE). Composition is skewed to basic and acidic residues over residues 529 to 544 (DDKPRRRKKDEVRTKA) and 666 to 689 (ALRKQFVEQEGDKVKEADIDDKAL). Residues 690-704 (AKQKKREKKLKRKAR) show a composition bias toward basic residues. Basic and acidic residues predominate over residues 767–781 (DERKPKSKVIELDHE).

This sequence belongs to the DEAD box helicase family. DDX10/DBP4 subfamily. Interacts with the U3 and U14 snoRNAs. Associates with pre-ribosomal complexes.

The protein localises to the nucleus. It is found in the nucleolus. It carries out the reaction ATP + H2O = ADP + phosphate + H(+). Functionally, ATP-dependent RNA helicase required for ribosome biogenesis. Involved in the release of U14 snoRNA in pre-ribosomal complexes. Required for pre-rRNA cleavage at site A2. The polypeptide is ATP-dependent RNA helicase DBP4 (DBP4) (Pyricularia oryzae (strain 70-15 / ATCC MYA-4617 / FGSC 8958) (Rice blast fungus)).